We begin with the raw amino-acid sequence, 181 residues long: uncharacterized protein (181 aa).

This is an uncharacterized protein from Homo sapiens (Human).